We begin with the raw amino-acid sequence, 719 residues long: Solute carrier family 15 member 2 (719 aa).

Over 1-43 the chain is Cytoplasmic; it reads MGKMKDKDVDAEKYEKAQRSPKLCGTNYPVSIAFIVVNEFCER. The chain crosses the membrane as a helical span at residues 44 to 61; it reads FSYYGMKAVLTLYFMNYL. At 62 to 69 the chain is on the extracellular side; the sequence is HWDKNLST. N-linked (GlcNAc...) asparagine glycosylation is present at asparagine 66. Residues 70–90 traverse the membrane as a helical segment; sequence AIYHAFSGLCYFTPLLGALIA. The Cytoplasmic segment spans residues 91-99; it reads DSWLGKFKT. Residues 100–120 form a helical membrane-spanning segment; that stretch reads IIYLSIVYVIGHVVKSVGAIP. Residues 121-125 lie on the Extracellular side of the membrane; sequence DVGDS. A helical membrane pass occupies residues 126–146; sequence TVHIALSMVGLGLIALGTGGI. Residues 147–169 are Cytoplasmic-facing; sequence KPCVAAFGGDQFDEDNIDERRKF. Residues 170 to 190 traverse the membrane as a helical segment; sequence FSIFYMSINAGSVLSTIITPI. At 191 to 201 the chain is on the extracellular side; that stretch reads LRGDVQCFGGD. The chain crosses the membrane as a helical span at residues 202 to 222; it reads CYALAFGVPAALMVIALVVFI. The Cytoplasmic segment spans residues 223–280; that stretch reads SGSGLYKKSPPEGNVLVRVCKCIGFAISNRWTNSKKSPKRSHWLDWAEEKYSKRLIQE. A helical membrane pass occupies residues 281 to 301; it reads IKMVCRVLVLYIPLPMFWALF. Residues 302–334 are Extracellular-facing; that stretch reads DQQGSRWTLQATRMNMDFGGGFIIKPDQMQMLN. The chain crosses the membrane as a helical span at residues 335–355; sequence ALLILVFIPIFDMGIYPLVGL. At 356–367 the chain is on the cytoplasmic side; it reads CRIKLTPLKKMA. Residues 368 to 388 traverse the membrane as a helical segment; that stretch reads TGMILAALAFCAATAVEVYVI. The Extracellular segment spans residues 389 to 594; it reads KTVVEPPPAK…QANNIHIGWQ (206 aa). Residues 389–594 are extracellular domain (ECD); the sequence is KTVVEPPPAK…QANNIHIGWQ (206 aa). Asparagine 481, asparagine 513, and asparagine 532 each carry an N-linked (GlcNAc...) asparagine glycan. A helical transmembrane segment spans residues 595–615; that stretch reads IPQYVFLTAGEVMFSITGLEF. The Cytoplasmic segment spans residues 616 to 626; the sequence is SYSQAPASMKS. The helical transmembrane segment at 627-647 threads the bilayer; the sequence is VLQAGWLMTVAFGNVIVLIVA. At 648–657 the chain is on the extracellular side; that stretch reads EGAGMEQWVE. The chain crosses the membrane as a helical span at residues 658–678; sequence FLLFAALLVAVSIIFSIMAYF. Residues 679–719 are Cytoplasmic-facing; the sequence is YTYVDPDQLDKLFKEDGDGGKVESSKKDELSLGDMPKQTKM. Residues 695–708 show a composition bias toward basic and acidic residues; sequence GDGGKVESSKKDEL. Residues 695–719 are disordered; sequence GDGGKVESSKKDELSLGDMPKQTKM.

It belongs to the major facilitator superfamily. Proton-dependent oligopeptide transporter (POT/PTR) (TC 2.A.17) family. Expressed in kidney, brain and gut. Also expressed weakly in eye, gill and skeletal muscle.

Its subcellular location is the apical cell membrane. It is found in the cytoplasmic vesicle. It localises to the phagosome membrane. The protein localises to the cell membrane. It carries out the reaction a dipeptide(out) + 2 H(+)(out) = a dipeptide(in) + 2 H(+)(in). The catalysed reaction is N-acetyl-D-muramoyl-L-alanyl-D-isoglutamine(out) + 3 H(+)(out) = N-acetyl-D-muramoyl-L-alanyl-D-isoglutamine(in) + 3 H(+)(in). It catalyses the reaction glycyl-L-leucine(out) + 2 H(+)(out) = glycyl-L-leucine(in) + 2 H(+)(in). The enzyme catalyses glycyl-L-lysine(out) + 2 H(+)(out) = glycyl-L-lysine(in) + 2 H(+)(in). It carries out the reaction glycyl-L-glutamate(out) + 3 H(+)(out) = glycyl-L-glutamate(in) + 3 H(+)(in). The catalysed reaction is L-alanyl-L-alanine(out) + 2 H(+)(out) = L-alanyl-L-alanine(in) + 2 H(+)(in). It catalyses the reaction an L-amino acid tripeptide(out) + 2 H(+)(out) = an L-amino acid tripeptide(in) + 2 H(+)(in). The enzyme catalyses carnosine(out) + 2 H(+)(out) = carnosine(in) + 2 H(+)(in). Its function is as follows. Proton-coupled amino-acid transporter that transports oligopeptides of 2 to 4 amino acids with a preference for dipeptides. Transports neutral and anionic dipeptides with a proton to peptide stoichiometry of 2:1 or 3:1. The protein is Solute carrier family 15 member 2 of Danio rerio (Zebrafish).